Here is a 966-residue protein sequence, read N- to C-terminus: MAAHRIRATTNNNTSLPRCKSEGTLIDLSEGVSEASLTDVKVPSPSALRLDATASFGAAREVVAIKDCCPSSFTTLKFSKGDRLYVLDSSGAEWWYAHNNTEMGYIPAAYVEPINYRDSSFSDSGMIDTVGDCNEEAAKEMDLLGEWAGVILKPTTFQNGNPFAATNSSTNPFLNGGPQSPLDQNSNEKSVDLLLFDTLAPSVPNSTSITADINGFGSGVLNMNPLSPTVGVGQTLRRDNPFFRSKRSYSLSELSILQAQSDAPQASTGFFGGLKAPAPEQFQSREDFRTAWLTHRKLARSCHDLDSLGQNPGWGQTQPVETNIVCRLDSSGGAVQLPDANISIHIPEGHVAPGDTQQISIKALLDPPLELNNDRCTTVSPVVEIKLSNMEIRTTVTLEMKVSVVVKIESRQTTEILCVRSDCKEGPYTPIPQAYIYGDMVQVCLDNLEPCMYVCVVAQSKSIAPDSTVWEHVVKKITLGVYGPKHIHPSFKTVVAMFGHDCAPKTLLVSEVGKQAQAVPPVALQLWGKHQFVLSRPQDLRVGVYSNMANYEVKASEQARVVRGFQVKLGKVSRLVYVIASRNADDVSDFTLRIQIKDDQDCILAQFCVQTPTPPPKAGPKTSVQRRFLKKKEVGKIVLSPLAITTKYPVFQDRRINNLKFGKLIKTVIRQTKNQYLLEYKKGDFVALLSEEKIRLKGQLWTKEWYIGYYQGRLGFVHAKNVLVVGKVKPIYFSGPDLTTSLFLEQILKPCKFLTYIYASVRTILMENIGNWRAFADSLGYINLPLTHFCRAELDSEPERVASVLEKLKEDCNNTESKERKSFQKELLTALLKMDCQGLVARLVMDFVLLTTAVELAGRWRELAEKLAKVSRQQMDAYEAPHRDKSGVVDSEAMWKPAYDFLVTWAAQIGDSYRDVIQELHMGLDKMKNPITKRWKHLTGTLILVNCMDALRSSAFSPAAQDDCAI.

The SH3 1 domain maps to G57–Y116. In terms of domain architecture, ZU5 spans T322 to V457. The SH3 2 domain occupies N657–K727.

Homodimer or homooligomer.

The protein resides in the membrane. It is found in the clathrin-coated pit. Its subcellular location is the cytoplasmic vesicle. It localises to the clathrin-coated vesicle. The protein localises to the nucleus. Functionally, possible role in regulating endocytosis of the transferrin receptor at the plasma membrane. Alternatively, may function as a negative regulator of the amino acid-induced TOR signaling by inhibiting the formation of active Rag GTPase complexes. Preferentially binds inactive Rag GTPase complexes and prevents their interaction with the mTORC1 complex inhibiting its relocalization to lysosomes and its activation. Thereby, may indirectly regulate cell growth, proliferation and autophagy. The chain is SH3 domain-binding protein 4 (sh3bp4) from Seriola quinqueradiata (Five-ray yellowtail).